Reading from the N-terminus, the 518-residue chain is D-aminopeptidase (518 aa).

Ser62 serves as the catalytic Nucleophile. Catalysis depends on Lys65, which acts as the Proton donor/acceptor. A disordered region spans residues 373 to 392; the sequence is FGTGPEKMDISGENEAQSSM. Residues 477–487 form an important for specificity region; sequence QRSMDAPSPGE. Residue Asp481 coordinates substrate.

It belongs to the peptidase S12 family. Homodimer.

The enzyme catalyses Release of an N-terminal D-amino acid from a peptide, Xaa-|-Yaa-, in which Xaa is preferably D-Ala, D-Ser or D-Thr. D-amino acid amides and methyl esters also are hydrolyzed, as is glycine amide.. With respect to regulation, inhibited by beta-lactam compounds such as 6-aminopenicillic acid, 7-aminocephalosporanic acid, benzylpenicillin and ampicillin. Inhibited by p-chloromercuribenzoate. Its function is as follows. Hydrolyzes N-terminal residues in D-amino acid-containing peptides. The polypeptide is D-aminopeptidase (Brucella melitensis biotype 1 (strain ATCC 23456 / CCUG 17765 / NCTC 10094 / 16M)).